A 232-amino-acid chain; its full sequence is 2-C-methyl-D-erythritol 4-phosphate cytidylyltransferase (232 aa).

The protein belongs to the IspD/TarI cytidylyltransferase family. IspD subfamily.

The enzyme catalyses 2-C-methyl-D-erythritol 4-phosphate + CTP + H(+) = 4-CDP-2-C-methyl-D-erythritol + diphosphate. It functions in the pathway isoprenoid biosynthesis; isopentenyl diphosphate biosynthesis via DXP pathway; isopentenyl diphosphate from 1-deoxy-D-xylulose 5-phosphate: step 2/6. Catalyzes the formation of 4-diphosphocytidyl-2-C-methyl-D-erythritol from CTP and 2-C-methyl-D-erythritol 4-phosphate (MEP). In Synechococcus sp. (strain ATCC 27144 / PCC 6301 / SAUG 1402/1) (Anacystis nidulans), this protein is 2-C-methyl-D-erythritol 4-phosphate cytidylyltransferase.